The sequence spans 96 residues: Co-chaperonin GroES (96 aa).

It belongs to the GroES chaperonin family. Heptamer of 7 subunits arranged in a ring. Interacts with the chaperonin GroEL.

It localises to the cytoplasm. In terms of biological role, together with the chaperonin GroEL, plays an essential role in assisting protein folding. The GroEL-GroES system forms a nano-cage that allows encapsulation of the non-native substrate proteins and provides a physical environment optimized to promote and accelerate protein folding. GroES binds to the apical surface of the GroEL ring, thereby capping the opening of the GroEL channel. This Verminephrobacter eiseniae (strain EF01-2) protein is Co-chaperonin GroES.